Here is a 391-residue protein sequence, read N- to C-terminus: uncharacterized protein (391 aa).

This is an uncharacterized protein from Methanocaldococcus jannaschii (strain ATCC 43067 / DSM 2661 / JAL-1 / JCM 10045 / NBRC 100440) (Methanococcus jannaschii).